The following is a 529-amino-acid chain: Ribonuclease Y (529 aa).

A helical membrane pass occupies residues Gly4–Tyr24. Positions Phe216–Val297 constitute a KH domain. One can recognise an HD domain in the interval Ala342–Gly435.

The protein belongs to the RNase Y family.

The protein localises to the cell membrane. Endoribonuclease that initiates mRNA decay. The chain is Ribonuclease Y from Helicobacter acinonychis (strain Sheeba).